Here is a 480-residue protein sequence, read N- to C-terminus: Zinc finger protein ztf-6 (480 aa).

Disordered stretches follow at residues 92-160, 174-198, 282-307, and 328-351; these read CHDS…TMMV, GTNGSSNSNTTSSSKSPQEEEEEHD, LDAGSSENDGSTSSSQPSPPADPTAS, and DANTSSADQKAAARKRKSTPMKVP. 4 stretches are compositionally biased toward low complexity: residues 95-105, 131-145, 174-187, and 286-296; these read SATSTTTTVSH, SSIESRSIRSVSSSV, GTNGSSNSNTTSSS, and SSENDGSTSSS. C2H2-type zinc fingers lie at residues 359–383 and 388–410; these read YICPMDGCNKVFKEKGSVHRHFVTH and FNCDKCKASYTQKHALMLHQKIH. A C2H2-type 3; degenerate zinc finger spans residues 416 to 441; that stretch reads YQCRGCGTNYTTQNGLRLHRQRNPAC. The interval 461–480 is disordered; the sequence is ALSGPLSKNSSPTKQMVSAP.

Functionally, probable transcription factor, involved in regulation of dopamine neuron lineage specification. May play a role in maintaining robustness of the Wnt/beta-catenin asymmetry pathway. This chain is Zinc finger protein ztf-6, found in Caenorhabditis elegans.